The primary structure comprises 29 residues: Toxin Bcg III 15.67 (29 aa).

The region spanning 2 to 29 (QGTACTGEHAHSFCLNGGTCRHIQQLGE) is the EGF-like domain. A disulfide bridge links C6 with C21.

The protein resides in the secreted. The protein localises to the nematocyst. Its function is as follows. Has both toxic and EGF activity. The chain is Toxin Bcg III 15.67 from Bunodosoma cangicum (Sea anemone).